The following is a 393-amino-acid chain: Putative mitogen-activated protein kinase kinase kinase 7-like (393 aa).

Positions 11–266 (KLSEKFLGAG…PSMKEIEKFL (256 aa)) constitute a Protein kinase domain. Residues 17–25 (LGAGSGGAV) and K38 contribute to the ATP site. D133 acts as the Proton acceptor in catalysis. A disordered region spans residues 339-379 (AAADGDREVRRAEKDTERETSRAAHNGERETRRAGQDVGRE).

This sequence belongs to the protein kinase superfamily. STE Ser/Thr protein kinase family. MAP kinase kinase kinase subfamily. Mg(2+) is required as a cofactor.

The catalysed reaction is L-seryl-[protein] + ATP = O-phospho-L-seryl-[protein] + ADP + H(+). It carries out the reaction L-threonyl-[protein] + ATP = O-phospho-L-threonyl-[protein] + ADP + H(+). This is Putative mitogen-activated protein kinase kinase kinase 7-like (Takl1) from Drosophila melanogaster (Fruit fly).